The primary structure comprises 73 residues: Putative defensin-like protein 33 (73 aa).

The N-terminal stretch at 1–25 is a signal peptide; sequence MASNKVSFIFILFLCVLSTAEFGEA. 3 disulfide bridges follow: C33–C59, C45–C68, and C49–C70.

It belongs to the DEFL family.

It localises to the secreted. This chain is Putative defensin-like protein 33, found in Arabidopsis thaliana (Mouse-ear cress).